A 600-amino-acid chain; its full sequence is Single-strand DNA endonuclease 1 (600 aa).

Residues Met1–Ile97 form an N-domain region. Residues Gly2–Ile97 are XPG-N domain. Asp30, Asp76, Glu142, Glu144, Asp163, Asp165, and Asp215 together coordinate Mg(2+). Positions Ser130–Asp215 are XPG-I domain. I-domain stretches follow at residues Ser130–Gln218 and Ser130–Gly219. Positions Asp215–Leu353 are 5'-3' exonuclease domain. The interval Met433–Leu458 is disordered. Over residues Ala435 to Gln444 the composition is skewed to basic residues.

The protein belongs to the XPG/RAD2 endonuclease family. GEN subfamily. It depends on Mg(2+) as a cofactor.

It localises to the nucleus. In terms of biological role, endonuclease which cleaves flap structures at the junction between single-stranded DNA and double-stranded DNA with a specific cleavage site in the 5' overhang strand exactly one nucleotide 3' of the branch point. Structure- and sequence-specific nuclease that resolves holliday junctions (HJs) by symmetrically oriented incisions in two opposing strands near the junction point, thus leading to ligatable products; HJs are physical links between homologous DNA molecules that arise as central intermediary structures during homologous recombination and repair in meiotic and somatic cells. Structure-specific nuclease with 5'-flap endonuclease activity, preferentially cleaving static flaps 5' overhang strand exactly one nucleotide in the 3' direction of the branch point and, to lower extent, on the two neighboring positions. Also able to cleave double-stranded flap strand 1 one nucleotide in the 3' direction of the branch point. Together with MUS81, essential for the resolution of toxic replication structures to ensure genome stability, and to maintain telomere integrity and replication. This chain is Single-strand DNA endonuclease 1, found in Arabidopsis thaliana (Mouse-ear cress).